Reading from the N-terminus, the 324-residue chain is Methionyl-tRNA formyltransferase (324 aa).

(6S)-5,6,7,8-tetrahydrofolate is bound at residue 109–112 (SLLP). Residues 305–324 (LHPGESFHKATQDNQGASET) are disordered.

It belongs to the Fmt family.

It carries out the reaction L-methionyl-tRNA(fMet) + (6R)-10-formyltetrahydrofolate = N-formyl-L-methionyl-tRNA(fMet) + (6S)-5,6,7,8-tetrahydrofolate + H(+). Attaches a formyl group to the free amino group of methionyl-tRNA(fMet). The formyl group appears to play a dual role in the initiator identity of N-formylmethionyl-tRNA by promoting its recognition by IF2 and preventing the misappropriation of this tRNA by the elongation apparatus. The polypeptide is Methionyl-tRNA formyltransferase (Nitrosomonas europaea (strain ATCC 19718 / CIP 103999 / KCTC 2705 / NBRC 14298)).